Consider the following 207-residue polypeptide: Outer-membrane lipoprotein LolB (207 aa).

The N-terminal stretch at 1–21 (MPLPDFRLIRLLPLAALVLTA) is a signal peptide. A lipid anchor (N-palmitoyl cysteine) is attached at cysteine 22. The S-diacylglycerol cysteine moiety is linked to residue cysteine 22.

Belongs to the LolB family. As to quaternary structure, monomer.

Its subcellular location is the cell outer membrane. Its function is as follows. Plays a critical role in the incorporation of lipoproteins in the outer membrane after they are released by the LolA protein. The sequence is that of Outer-membrane lipoprotein LolB from Shigella dysenteriae serotype 1 (strain Sd197).